Reading from the N-terminus, the 206-residue chain is MTFKNKLKFYVITDRKYSCEVYSVEQALKGGATAVQLRMKSSNTREMVEVGQKIRKLTLEYDALFFVNDRLDIAQAVKSDGIHVGIDDISISKIKEIAPELIIGASAYNINEMKIAESEGADYLGVGSVYPTNTKLDARYLGLNGLKELSNCSNLPVVAIGGINHENVKEVLMCGVSGVAVVSAIVGANDIIFSAKKMNEIIKKYI.

4-amino-2-methyl-5-(diphosphooxymethyl)pyrimidine is bound by residues 36-40 and N68; that span reads QLRMK. The Mg(2+) site is built by D69 and D88. S106 is a binding site for 4-amino-2-methyl-5-(diphosphooxymethyl)pyrimidine. 2-[(2R,5Z)-2-carboxy-4-methylthiazol-5(2H)-ylidene]ethyl phosphate is bound at residue 132-134; the sequence is TNT. K135 lines the 4-amino-2-methyl-5-(diphosphooxymethyl)pyrimidine pocket. 2-[(2R,5Z)-2-carboxy-4-methylthiazol-5(2H)-ylidene]ethyl phosphate-binding positions include G162 and 182 to 183; that span reads VS.

Belongs to the thiamine-phosphate synthase family. Requires Mg(2+) as cofactor.

The enzyme catalyses 2-[(2R,5Z)-2-carboxy-4-methylthiazol-5(2H)-ylidene]ethyl phosphate + 4-amino-2-methyl-5-(diphosphooxymethyl)pyrimidine + 2 H(+) = thiamine phosphate + CO2 + diphosphate. The catalysed reaction is 2-(2-carboxy-4-methylthiazol-5-yl)ethyl phosphate + 4-amino-2-methyl-5-(diphosphooxymethyl)pyrimidine + 2 H(+) = thiamine phosphate + CO2 + diphosphate. It carries out the reaction 4-methyl-5-(2-phosphooxyethyl)-thiazole + 4-amino-2-methyl-5-(diphosphooxymethyl)pyrimidine + H(+) = thiamine phosphate + diphosphate. Its pathway is cofactor biosynthesis; thiamine diphosphate biosynthesis; thiamine phosphate from 4-amino-2-methyl-5-diphosphomethylpyrimidine and 4-methyl-5-(2-phosphoethyl)-thiazole: step 1/1. Its function is as follows. Condenses 4-methyl-5-(beta-hydroxyethyl)thiazole monophosphate (THZ-P) and 2-methyl-4-amino-5-hydroxymethyl pyrimidine pyrophosphate (HMP-PP) to form thiamine monophosphate (TMP). The sequence is that of Thiamine-phosphate synthase from Methanococcus vannielii (strain ATCC 35089 / DSM 1224 / JCM 13029 / OCM 148 / SB).